Consider the following 388-residue polypeptide: Na(+)/H(+) antiporter NhaA (388 aa).

The Cytoplasmic portion of the chain corresponds to 1 to 11; that stretch reads MKHLHRFFSSD. Residues 12-31 traverse the membrane as a helical segment; it reads ASGGIILIIAAILAMMMANS. Topologically, residues 32–58 are periplasmic; the sequence is GATSGWYHDFLETPVQLRVGSLEINKN. Residues 59–80 traverse the membrane as a helical segment; it reads MLLWINDALMAVFFLLVGLEVK. Topologically, residues 81 to 96 are cytoplasmic; the sequence is RELMQGSLASLRQAAF. A helical membrane pass occupies residues 97–116; the sequence is PVIAAIGGMIVPALLYLAFN. At 117 to 122 the chain is on the periplasmic side; that stretch reads YADPIT. The chain crosses the membrane as a helical span at residues 123 to 130; it reads REGWAIPA. Topologically, residues 131-154 are cytoplasmic; that stretch reads ATDIAFALGVLALLGSRVPLALKI. The helical transmembrane segment at 155–176 threads the bilayer; the sequence is FLMALAIIDDLGAIIIIALFYT. Residues 177–180 lie on the Periplasmic side of the membrane; it reads NDLS. The chain crosses the membrane as a helical span at residues 181–200; it reads MASLGVAAVAIAVLAVLNLC. Over 201–204 the chain is Cytoplasmic; that stretch reads GVRR. A helical membrane pass occupies residues 205–222; that stretch reads TGVYILVGVVLWTAVLKS. Position 223 (glycine 223) is a topological domain, periplasmic. A helical membrane pass occupies residues 224–236; the sequence is VHATLAGVIVGFF. Residues 237 to 253 are Cytoplasmic-facing; sequence IPLKEKHGRSPAKRLEH. A helical membrane pass occupies residues 254-272; it reads VLHPWVAYLILPLFAFANA. Residues 273–286 are Periplasmic-facing; it reads GVSLQGVTLDGLTS. A helical membrane pass occupies residues 287-310; the sequence is ILPLGIIAGLLIGKPLGISLFCWL. The Cytoplasmic portion of the chain corresponds to 311–339; that stretch reads ALRLKLAHLPEGTTYQQIMAVGILCGIGF. A helical membrane pass occupies residues 340-350; the sequence is TMSIFIASLAF. The Periplasmic portion of the chain corresponds to 351-357; the sequence is GSVDPEL. The helical transmembrane segment at 358–380 threads the bilayer; the sequence is INWAKLGILVGSISSAVIGYSWL. The Cytoplasmic segment spans residues 381–388; the sequence is RVRLRPSV.

The protein belongs to the NhaA Na(+)/H(+) (TC 2.A.33) antiporter family.

Its subcellular location is the cell inner membrane. It carries out the reaction Na(+)(in) + 2 H(+)(out) = Na(+)(out) + 2 H(+)(in). In terms of biological role, na(+)/H(+) antiporter that extrudes sodium in exchange for external protons. The polypeptide is Na(+)/H(+) antiporter NhaA (Shigella boydii serotype 4 (strain Sb227)).